The sequence spans 501 residues: Aldehyde dehydrogenase 1A1 (501 aa).

Residue Ser2 is modified to N-acetylserine. N6-acetyllysine is present on residues Lys91 and Lys128. Residues 167–170 (IPWN), 193–196 (KPAE), 226–227 (GP), and 246–247 (GS) contribute to the NAD(+) site. Lys252 is modified (N6-acetyllysine). Glu269 functions as the Proton acceptor in the catalytic mechanism. Position 269–271 (269–271 (ELG)) interacts with NAD(+). Cys303 serves as the catalytic Nucleophile. Positions 336-501 (LTPGVSQGPQ…VTIKISQKNS (166 aa)) are mediates interaction with PRMT3. The residue at position 337 (Thr337) is a Phosphothreonine. 349–353 (EQYEK) lines the NAD(+) pocket. N6-acetyllysine occurs at positions 353 and 367. 400–402 (EIF) contacts NAD(+). The residue at position 410 (Lys410) is an N6-acetyllysine. Ser413 bears the Phosphoserine mark. An N6-acetyllysine mark is found at Lys419 and Lys495.

It belongs to the aldehyde dehydrogenase family. As to quaternary structure, homotetramer. Interacts with PRMT3; the interaction is direct, inhibits ALDH1A1 aldehyde dehydrogenase activity and is independent of the methyltransferase activity of PRMT3. In terms of processing, the N-terminus is blocked most probably by acetylation. In terms of tissue distribution, expressed in muscle, liver, small intestine, kidney, brain, lung, heart but not detected in erythrocytes (at protein level).

The protein resides in the cytoplasm. It is found in the cytosol. Its subcellular location is the cell projection. The protein localises to the axon. The enzyme catalyses an aldehyde + NAD(+) + H2O = a carboxylate + NADH + 2 H(+). The catalysed reaction is all-trans-retinal + NAD(+) + H2O = all-trans-retinoate + NADH + 2 H(+). It carries out the reaction 9-cis-retinal + NAD(+) + H2O = 9-cis-retinoate + NADH + 2 H(+). It catalyses the reaction 11-cis-retinal + NAD(+) + H2O = 11-cis-retinoate + NADH + 2 H(+). The enzyme catalyses 13-cis-retinal + NAD(+) + H2O = 13-cis-retinoate + NADH + 2 H(+). The catalysed reaction is 3-deoxyglucosone + NAD(+) + H2O = 2-dehydro-3-deoxy-D-gluconate + NADH + 2 H(+). It carries out the reaction (E)-4-hydroxynon-2-enal + NAD(+) + H2O = (E)-4-hydroxynon-2-enoate + NADH + 2 H(+). It catalyses the reaction malonaldehyde + NAD(+) + H2O = 3-oxopropanoate + NADH + 2 H(+). The enzyme catalyses hexanal + NAD(+) + H2O = hexanoate + NADH + 2 H(+). The catalysed reaction is propanal + NAD(+) + H2O = propanoate + NADH + 2 H(+). It carries out the reaction acetaldehyde + NAD(+) + H2O = acetate + NADH + 2 H(+). It catalyses the reaction benzaldehyde + NAD(+) + H2O = benzoate + NADH + 2 H(+). The enzyme catalyses 4-aminobutanal + NAD(+) + H2O = 4-aminobutanoate + NADH + 2 H(+). The protein operates within cofactor metabolism; retinol metabolism. In terms of biological role, cytosolic dehydrogenase that catalyzes the irreversible oxidation of a wide range of aldehydes to their corresponding carboxylic acid. Functions downstream of retinol dehydrogenases and catalyzes the oxidation of retinaldehyde into retinoic acid, the second step in the oxidation of retinol/vitamin A into retinoic acid. This pathway is crucial to control the levels of retinol and retinoic acid, two important molecules which excess can be teratogenic and cytotoxic. Also oxidizes aldehydes resulting from lipid peroxidation like (E)-4-hydroxynon-2-enal/HNE, malonaldehyde and hexanal that form protein adducts and are highly cytotoxic. By participating for instance to the clearance of (E)-4-hydroxynon-2-enal/HNE in the lens epithelium prevents the formation of HNE-protein adducts and lens opacification. Also functions downstream of fructosamine-3-kinase in the fructosamine degradation pathway by catalyzing the oxidation of 3-deoxyglucosone, the carbohydrate product of fructosamine 3-phosphate decomposition, which is itself a potent glycating agent that may react with lysine and arginine side-chains of proteins. Also has an aminobutyraldehyde dehydrogenase activity and is probably part of an alternative pathway for the biosynthesis of GABA/4-aminobutanoate in midbrain, thereby playing a role in GABAergic synaptic transmission. The polypeptide is Aldehyde dehydrogenase 1A1 (Bos taurus (Bovine)).